The following is a 64-amino-acid chain: Large ribosomal subunit protein bL35c (64 aa).

The protein belongs to the bacterial ribosomal protein bL35 family.

It is found in the plastid. It localises to the chloroplast. The chain is Large ribosomal subunit protein bL35c from Phaeodactylum tricornutum (strain CCAP 1055/1).